The primary structure comprises 98 residues: Feather beta keratin (98 aa).

S2 carries the N-acetylserine modification.

The protein belongs to the avian keratin family. As to quaternary structure, the avian keratins (F-ker, S-ker, C-ker and B-ker) are a complex mixture of very similar polypeptides.

The polypeptide is Feather beta keratin (Mycteria americana (Wood stork)).